The chain runs to 398 residues: Succinyl-diaminopimelate desuccinylase (398 aa).

A Zn(2+)-binding site is contributed by His-68. Residue Asp-70 is part of the active site. Asp-101 contributes to the Zn(2+) binding site. Glu-135 serves as the catalytic Proton acceptor. Glu-136, Glu-164, and His-349 together coordinate Zn(2+).

The protein belongs to the peptidase M20A family. DapE subfamily. Homodimer. The cofactor is Zn(2+). Co(2+) is required as a cofactor.

It carries out the reaction N-succinyl-(2S,6S)-2,6-diaminopimelate + H2O = (2S,6S)-2,6-diaminopimelate + succinate. The protein operates within amino-acid biosynthesis; L-lysine biosynthesis via DAP pathway; LL-2,6-diaminopimelate from (S)-tetrahydrodipicolinate (succinylase route): step 3/3. In terms of biological role, catalyzes the hydrolysis of N-succinyl-L,L-diaminopimelic acid (SDAP), forming succinate and LL-2,6-diaminopimelate (DAP), an intermediate involved in the bacterial biosynthesis of lysine and meso-diaminopimelic acid, an essential component of bacterial cell walls. The sequence is that of Succinyl-diaminopimelate desuccinylase from Wolbachia pipientis wMel.